The following is a 501-amino-acid chain: Cytochrome P450 monooxygenase notH (501 aa).

The chain crosses the membrane as a helical span at residues 11–31 (LGLESVGWVLGLLTTSILYLF). The N-linked (GlcNAc...) asparagine glycan is linked to Asn-298. Cys-442 contributes to the heme binding site.

This sequence belongs to the cytochrome P450 family. Heme is required as a cofactor.

The protein resides in the membrane. It functions in the pathway alkaloid biosynthesis. Functionally, cytochrome P450 monooxygenase; part of the gene cluster that mediates the biosynthesis of notoamide, a fungal indole alkaloid that belongs to a family of natural products containing a characteristic bicyclo[2.2.2]diazaoctane core. The first step of notoamide biosynthesis involves coupling of L-proline and L-tryptophan by the bimodular NRPS notE, to produce cyclo-L-tryptophan-L-proline called brevianamide F. The reverse prenyltransferase notF then acts as a deoxybrevianamide E synthase and converts brevianamide F to deoxybrevianamide E via reverse prenylation at C-2 of the indole ring leading to the bicyclo[2.2.2]diazaoctane core. Deoxybrevianamide E is further hydroxylated at C-6 of the indole ring, likely catalyzed by the cytochrome P450 monooxygenase notG, to yield 6-hydroxy-deoxybrevianamide E. 6-hydroxy-deoxybrevianamide E is a specific substrate of the prenyltransferase notC for normal prenylation at C-7 to produce 6-hydroxy-7-prenyl-deoxybrevianamide, also called notoamide S. As the proposed pivotal branching point in notoamide biosynthesis, notoamide S can be diverted to notoamide E through an oxidative pyran ring closure putatively catalyzed by either notH cytochrome P450 monooxygenase or the notD FAD-linked oxidoreductase. This step would be followed by an indole 2,3-epoxidation-initiated pinacol-like rearrangement catalyzed by the notB FAD-dependent monooxygenase leading to the formation of notoamide C and notoamide D. On the other hand notoamide S is converted to notoamide T by notH (or notD), a bifunctional oxidase that also functions as the intramolecular Diels-Alderase responsible for generation of (+)-notoamide T. To generate antipodal (-)-notoaminide T, notH' (or notD') in Aspergillus versicolor is expected to catalyze a Diels-Alder reaction leading to the opposite stereochemistry. The remaining oxidoreductase notD (or notH) likely catalyzes the oxidative pyran ring formation to yield (+)-stephacidin A. The FAD-dependent monooxygenase notI is highly similar to notB and is predicted to catalyze a similar conversion from (+)-stephacidin A to (-)-notoamide B via the 2,3-epoxidation of (+)-stephacidin A followed by a pinacol-type rearrangement. Finally, it remains unclear which enzyme could be responsible for the final hydroxylation steps leading to notoamide A and sclerotiamide. The protein is Cytochrome P450 monooxygenase notH of Aspergillus sp. (strain MF297-2).